A 984-amino-acid polypeptide reads, in one-letter code: Zinc finger and BTB domain-containing protein 4 (984 aa).

In terms of domain architecture, BTB spans 30-131 (CDVTLIAGDT…IYSARLALPG (102 aa)). A Glycyl lysine isopeptide (Lys-Gly) (interchain with G-Cter in SUMO2) cross-link involves residue K40. 3 disordered regions span residues 71 to 104 (TGGS…PPRV), 172 to 210 (MVTS…RRPF), and 227 to 262 (THEA…ASAL). A compositionally biased stretch (low complexity) spans 74–88 (SAPSPATTTAASSSS). The tract at residues 165-324 (VPPAPSSMVT…CRYCEKVFAL (160 aa)) is interaction with CBFA2T3. Residues 210-232 (FPCPRCGKSFIHPKRLQTHEAQC) form a C2H2-type 1; atypical zinc finger. Residues 242–255 (AGLGPGGSGPGGPA) are compositionally biased toward gly residues. 3 C2H2-type zinc fingers span residues 285–307 (YVCA…SNVH), 313–335 (YPCR…EVWH), and 341–364 (YQCI…RAFH). Position 367 is a phosphoserine (S367). A disordered region spans residues 461–575 (GSSSSGAAGG…GSSQLQAPPP (115 aa)). Over residues 467–477 (AAGGGPVGTGG) the composition is skewed to gly residues. 2 stretches are compositionally biased toward low complexity: residues 478–488 (SQAASVITYTT) and 507–529 (ATPT…ATAT). A Glycyl lysine isopeptide (Lys-Gly) (interchain with G-Cter in SUMO2) cross-link involves residue K548. A compositionally biased stretch (gly residues) spans 552-565 (GVSGSGGSPTGTGR). K590 participates in a covalent cross-link: Glycyl lysine isopeptide (Lys-Gly) (interchain with G-Cter in SUMO2). 5 disordered regions span residues 593-696 (ISET…GERR), 713-734 (RKHQ…RSST), 756-836 (QRHA…VAGG), 853-876 (GGSR…ASEG), and 947-984 (QTAP…GDVG). Over residues 604 to 627 (SGEEVEESEEEEEEEEEEDQEDQE) the composition is skewed to acidic residues. Residues 628 to 637 (ESKAGGEDQL) show a composition bias toward basic and acidic residues. 2 consecutive C2H2-type zinc fingers follow at residues 697 to 719 (HRCG…QEAH) and 736 to 758 (FTCP…GQRH). Phosphothreonine; by HIPK2 occurs at positions 766 and 768. The span at 807–819 (AAAAAAEASESAS) shows a compositional bias: low complexity. Residues 948–966 (TAPPTPPTPPPPLPLPVPP) are compositionally biased toward pro residues. Phosphothreonine; by HIPK2 is present on T955.

In terms of assembly, interacts with HIPK2. Interacts with CBFA2T3. Interacts with ZBTB38. Phosphorylated by HIPK2. This phosphorylation reduces stability and triggers ZBTB4 protein degradation in response to DNA damage.

The protein localises to the nucleus. Its subcellular location is the chromosome. Functionally, transcriptional repressor with bimodal DNA-binding specificity. Represses transcription in a methyl-CpG-dependent manner. Binds with a higher affinity to methylated CpG dinucleotides in the consensus sequence 5'-CGCG-3' but can also bind to the non-methylated consensus sequence 5'-CTGCNA-3' also known as the consensus kaiso binding site (KBS). Can also bind specifically to a single methyl-CpG pair and can bind hemimethylated DNA but with a lower affinity compared to methylated DNA. Plays a role in postnatal myogenesis, may be involved in the regulation of satellite cells self-renewal. This Rattus norvegicus (Rat) protein is Zinc finger and BTB domain-containing protein 4 (Zbtb4).